The primary structure comprises 134 residues: Holo-[acyl-carrier-protein] synthase (134 aa).

The Mg(2+) site is built by Asp8 and Glu59.

It belongs to the P-Pant transferase superfamily. AcpS family. Mg(2+) serves as cofactor.

The protein resides in the cytoplasm. It carries out the reaction apo-[ACP] + CoA = holo-[ACP] + adenosine 3',5'-bisphosphate + H(+). Its function is as follows. Transfers the 4'-phosphopantetheine moiety from coenzyme A to a Ser of acyl-carrier-protein. The chain is Holo-[acyl-carrier-protein] synthase from Zymomonas mobilis subsp. mobilis (strain ATCC 31821 / ZM4 / CP4).